The sequence spans 1063 residues: JmjC domain-containing histone demethylation protein 1 (1063 aa).

The region spanning 86–266 (LYNVLSLEYS…TQLRVYQVEN (181 aa)) is the JmjC domain. Residue threonine 160 participates in substrate binding. Residues histidine 163 and aspartate 165 each contribute to the Fe cation site. Residue lysine 180 coordinates substrate. Histidine 234 contributes to the Fe cation binding site. Residues 379–389 (GLEEEAEDEDV) are compositionally biased toward acidic residues. 3 disordered regions span residues 379–400 (GLEE…AEER), 554–750 (ESDE…NPYN), and 776–1040 (VELH…KRAK). A compositionally biased stretch (basic and acidic residues) spans 390–400 (KPETKKEAEER). Acidic residues-rich tracts occupy residues 594–605 (PEYDEDMEEYDP) and 613–631 (ELEE…EEEY). Positions 636–646 (TRRSSTRGSAS) are enriched in low complexity. 5 stretches are compositionally biased toward basic and acidic residues: residues 647–665 (TKEE…PKKE), 674–712 (EKSS…ELRA), 776–806 (VELH…HEDS), 813–835 (PYDR…DSHR), and 892–902 (EPRRSNDRRTS). A compositionally biased stretch (low complexity) spans 926 to 937 (AEAASASSSRHS). 2 stretches are compositionally biased toward polar residues: residues 950-963 (LNSS…TPMY) and 973-982 (WLPNTSNVTR). A compositionally biased stretch (pro residues) spans 1005–1016 (PPFPRSITPPPV). Polar residues predominate over residues 1020–1030 (ELKSQSNGRKS). Positions 1031–1040 (NYSEDGKRAK) are enriched in basic and acidic residues.

The protein belongs to the JHDM1 histone demethylase family. Fe(2+) serves as cofactor.

Its subcellular location is the nucleus. The catalysed reaction is N(6),N(6)-dimethyl-L-lysyl(36)-[histone H3] + 2 2-oxoglutarate + 2 O2 = L-lysyl(36)-[histone H3] + 2 formaldehyde + 2 succinate + 2 CO2. In terms of biological role, histone demethylase that specifically demethylates 'Lys-36' of histone H3, thereby playing a central role in histone code. The chain is JmjC domain-containing histone demethylation protein 1 (jhdm-1) from Caenorhabditis briggsae.